The following is a 1339-amino-acid chain: Receptor tyrosine-protein kinase erbB-3 (1339 aa).

A signal peptide spans 1 to 19; sequence MSAIGTLQVLGFLLSLARG. Topologically, residues 20–641 are extracellular; sequence SEMGNSQAVC…QAEVLMSKPH (622 aa). Asn126 carries an N-linked (GlcNAc...) asparagine glycan. 11 disulfide bridges follow: Cys186-Cys194, Cys190-Cys202, Cys210-Cys218, Cys214-Cys226, Cys227-Cys235, Cys231-Cys243, Cys246-Cys255, Cys259-Cys286, Cys290-Cys301, Cys305-Cys320, and Cys323-Cys327. A glycan (N-linked (GlcNAc...) asparagine) is linked at Asn250. Residues Asn353, Asn408, Asn414, Asn437, and Asn469 are each glycosylated (N-linked (GlcNAc...) asparagine). Intrachain disulfides connect Cys500/Cys509, Cys504/Cys517, Cys520/Cys529, Cys533/Cys549, Cys552/Cys565, Cys556/Cys573, Cys576/Cys585, Cys589/Cys610, Cys613/Cys621, and Cys617/Cys629. Residue Asn522 is glycosylated (N-linked (GlcNAc...) asparagine). Asn566 carries an N-linked (GlcNAc...) asparagine glycan. Asn616 carries N-linked (GlcNAc...) asparagine glycosylation. Residues 642–662 form a helical membrane-spanning segment; that stretch reads LVIAVTVGLTVIFLILGGSFL. Residues 663–1339 are Cytoplasmic-facing; sequence YWRGRRIQNK…LFPKANAQRI (677 aa). A Phosphoserine modification is found at Ser684. Residues 707-964 enclose the Protein kinase domain; that stretch reads LRKLKVLGSG…TFKELANEFT (258 aa). ATP contacts are provided by residues 713 to 721, Lys740, 786 to 788, and 832 to 837; these read LGSGVFGTV, QYL, and DLALRN. Asp832 functions as the Proton acceptor in the catalytic mechanism. Position 980 is a phosphoserine (Ser980). 3 disordered regions span residues 1028–1052, 1077–1156, and 1181–1212; these read LSLP…SGYM, RPIS…GNGY, and SVLG…PRPG. A compositionally biased stretch (acidic residues) spans 1185-1195; sequence TEEEDEDEEYE.

It belongs to the protein kinase superfamily. Tyr protein kinase family. EGF receptor subfamily. In terms of assembly, monomer and homodimer. Heterodimer with each of the other ERBB receptors (Potential). Interacts with CSPG5, PA2G4, GRB7 and MUC1. Interacts with MYOC. Found in a ternary complex with NRG1 and ITGAV:ITGB3 or ITGA6:ITGB4. In terms of processing, autophosphorylated. Ligand-binding increases phosphorylation on tyrosine residues and promotes its association with the p85 subunit of phosphatidylinositol 3-kinase. As to expression, in the muscle, expression localizes to the synaptic sites of muscle fibers.

Its subcellular location is the membrane. The enzyme catalyses L-tyrosyl-[protein] + ATP = O-phospho-L-tyrosyl-[protein] + ADP + H(+). Tyrosine-protein kinase that plays an essential role as cell surface receptor for neuregulins. Binds to neuregulin-1 (NRG1) and is activated by it; ligand-binding increases phosphorylation on tyrosine residues and promotes its association with the p85 subunit of phosphatidylinositol 3-kinase. May also be activated by CSPG5. Involved in the regulation of myeloid cell differentiation. This Mus musculus (Mouse) protein is Receptor tyrosine-protein kinase erbB-3 (Erbb3).